A 719-amino-acid chain; its full sequence is 1,4-alpha-glucan branching enzyme GlgB (719 aa).

Catalysis depends on Asp-400, which acts as the Nucleophile. Glu-453 functions as the Proton donor in the catalytic mechanism.

Belongs to the glycosyl hydrolase 13 family. GlgB subfamily. Monomer.

The catalysed reaction is Transfers a segment of a (1-&gt;4)-alpha-D-glucan chain to a primary hydroxy group in a similar glucan chain.. Its pathway is glycan biosynthesis; glycogen biosynthesis. In terms of biological role, catalyzes the formation of the alpha-1,6-glucosidic linkages in glycogen by scission of a 1,4-alpha-linked oligosaccharide from growing alpha-1,4-glucan chains and the subsequent attachment of the oligosaccharide to the alpha-1,6 position. This chain is 1,4-alpha-glucan branching enzyme GlgB, found in Chlamydia caviae (strain ATCC VR-813 / DSM 19441 / 03DC25 / GPIC) (Chlamydophila caviae).